The chain runs to 120 residues: Chaperonin GroEL (120 aa).

Residue Asp-23–Thr-27 participates in ATP binding.

It belongs to the chaperonin (HSP60) family. As to quaternary structure, forms a cylinder of 14 subunits composed of two heptameric rings stacked back-to-back. Interacts with the co-chaperonin GroES.

It is found in the cytoplasm. It catalyses the reaction ATP + H2O + a folded polypeptide = ADP + phosphate + an unfolded polypeptide.. In terms of biological role, together with its co-chaperonin GroES, plays an essential role in assisting protein folding. The GroEL-GroES system forms a nano-cage that allows encapsulation of the non-native substrate proteins and provides a physical environment optimized to promote and accelerate protein folding. The polypeptide is Chaperonin GroEL (Mycobacterium scrofulaceum).